A 518-amino-acid polypeptide reads, in one-letter code: Maturase K (518 aa).

Belongs to the intron maturase 2 family. MatK subfamily.

The protein resides in the plastid. Its subcellular location is the chloroplast. Functionally, usually encoded in the trnK tRNA gene intron. Probably assists in splicing its own and other chloroplast group II introns. The chain is Maturase K from Syzygium cumini (Java plum).